Reading from the N-terminus, the 86-residue chain is Anti-adapter protein IraP (86 aa).

Positions 1 to 36 form a coiled coil; the sequence is MKNLIAELLLKLAQKEEESKELVAQVEALEIIVTAM.

This sequence belongs to the IraP family. As to quaternary structure, interacts with RssB.

The protein resides in the cytoplasm. Functionally, inhibits RpoS proteolysis by regulating RssB activity, thereby increasing the stability of the sigma stress factor RpoS especially during phosphate and magnesium starvation, but also in stationary phase and during nitrogen starvation. Its effect on RpoS stability is due to its interaction with RssB, which probably blocks the interaction of RssB with RpoS, and the consequent delivery of the RssB-RpoS complex to the ClpXP protein degradation pathway. The chain is Anti-adapter protein IraP from Salmonella choleraesuis (strain SC-B67).